A 553-amino-acid chain; its full sequence is Arginine--tRNA ligase (553 aa).

Positions 123 to 133 match the 'HIGH' region motif; it reads ANPTGPLTIGR.

The protein belongs to the class-I aminoacyl-tRNA synthetase family. As to quaternary structure, monomer.

The protein resides in the cytoplasm. The enzyme catalyses tRNA(Arg) + L-arginine + ATP = L-arginyl-tRNA(Arg) + AMP + diphosphate. In Chlorobium phaeobacteroides (strain BS1), this protein is Arginine--tRNA ligase.